A 389-amino-acid polypeptide reads, in one-letter code: Geodin cluster transcriptional coactivator gedD (389 aa).

Residues 13–83 form the HTH iclR-type domain; that stretch reads LAWHVQLLAC…QPGQIMHTPL (71 aa). The H-T-H motif DNA-binding region spans 43 to 62; the sequence is VRDLAQLCGVSETTLSRVVR.

Its subcellular location is the nucleus. Transcriptional coactivator; part of the gene cluster that mediates the biosynthesis of geodin, an intermediate in the biosynthesis of other natural products. With gedR, coregulates the production of geodin. The chain is Geodin cluster transcriptional coactivator gedD (gedD) from Aspergillus terreus (strain NIH 2624 / FGSC A1156).